The sequence spans 747 residues: Endoglucanase D (747 aa).

An N-terminal signal peptide occupies residues M1–A39. E208 (proton donor) is an active-site residue. E349 serves as the catalytic Nucleophile. The tract at residues A456 to S475 is disordered. 2 Fibronectin type-III domains span residues A456–G543 and V552–D639. Positions P465–S475 are enriched in polar residues. The CBM2 domain occupies P638–R747.

The protein belongs to the glycosyl hydrolase 5 (cellulase A) family.

The enzyme catalyses Endohydrolysis of (1-&gt;4)-beta-D-glucosidic linkages in cellulose, lichenin and cereal beta-D-glucans.. The protein operates within glycan metabolism; cellulose degradation. The chain is Endoglucanase D (cenD) from Cellulomonas fimi.